The primary structure comprises 123 residues: Nitrogenase-stabilizing/protective protein NifW (123 aa).

Belongs to the NifW family. Homotrimer; associates with NifD.

In terms of biological role, may protect the nitrogenase Fe-Mo protein from oxidative damage. This Rhodopseudomonas palustris (strain HaA2) protein is Nitrogenase-stabilizing/protective protein NifW.